A 352-amino-acid polypeptide reads, in one-letter code: Small glutamine-rich tetratricopeptide repeat-containing protein 2 (352 aa).

The segment covering 80–97 (PAAASSSSTAPAAAAATP) has biased composition (low complexity). Residues 80 to 103 (PAAASSSSTAPAAAAATPSDEDLA) are disordered. TPR repeat units lie at residues 105 to 138 (AEQLKAEGNKAMSAKDYGAAIEAYGKAIELNPNS), 140 to 172 (VYFSNRAAAFSQIGQHDSAIDDAKQASKIDPKF), and 173 to 206 (GKAYSRLGHALFSSGRYQEAVEAYQKGVEVDPSN). Residues 217–236 (KEQLSSSSSSNANDATASRG) are disordered.

Belongs to the SGT family.

Its function is as follows. Co-chaperone that binds to the molecular chaperone Hsp70 and regulates Hsp70 ATPase activity. This is Small glutamine-rich tetratricopeptide repeat-containing protein 2 from Mycosarcoma maydis (Corn smut fungus).